The primary structure comprises 153 residues: Cell division protein SepF (153 aa).

This sequence belongs to the SepF family. Homodimer. Interacts with FtsZ.

It localises to the cytoplasm. Cell division protein that is part of the divisome complex and is recruited early to the Z-ring. Probably stimulates Z-ring formation, perhaps through the cross-linking of FtsZ protofilaments. Its function overlaps with FtsA. In Clostridium novyi (strain NT), this protein is Cell division protein SepF.